The chain runs to 213 residues: Ribosomal RNA small subunit methyltransferase G (213 aa).

Residues Gly75, Phe80, 128 to 129, and Arg144 each bind S-adenosyl-L-methionine; that span reads IE.

The protein belongs to the methyltransferase superfamily. RNA methyltransferase RsmG family.

Its subcellular location is the cytoplasm. It catalyses the reaction guanosine(527) in 16S rRNA + S-adenosyl-L-methionine = N(7)-methylguanosine(527) in 16S rRNA + S-adenosyl-L-homocysteine. In terms of biological role, specifically methylates the N7 position of guanine in position 527 of 16S rRNA. This is Ribosomal RNA small subunit methyltransferase G from Brucella ovis (strain ATCC 25840 / 63/290 / NCTC 10512).